Here is a 265-residue protein sequence, read N- to C-terminus: Energy-coupling factor transporter transmembrane protein EcfT (265 aa).

5 helical membrane passes run 29 to 49 (IILFATLIFLANNTVTYAILI), 73 to 93 (VWILILFTVVLHIFITKGGTV), 110 to 130 (AIFISLRLGLLILISSLLTLT), 143 to 163 (LLGPLGKIGIPVHDIALMMSI), and 242 to 262 (FTWRDGIVAVVSVILVIVIGW).

The protein belongs to the energy-coupling factor EcfT family. In terms of assembly, forms a stable energy-coupling factor (ECF) transporter complex composed of 2 membrane-embedded substrate-binding proteins (S component), 2 ATP-binding proteins (A component) and 2 transmembrane proteins (T component). May be able to interact with more than 1 S component at a time.

It is found in the cell membrane. Transmembrane (T) component of an energy-coupling factor (ECF) ABC-transporter complex. Unlike classic ABC transporters this ECF transporter provides the energy necessary to transport a number of different substrates. This chain is Energy-coupling factor transporter transmembrane protein EcfT, found in Brevibacillus brevis (strain 47 / JCM 6285 / NBRC 100599).